Reading from the N-terminus, the 359-residue chain is 3-isopropylmalate dehydrogenase (359 aa).

76 to 89 (GPKWDTIERSIRPE) contributes to the NAD(+) binding site. The substrate site is built by R96, R106, R134, and D225. Mg(2+)-binding residues include D225, D249, and D253. 283-295 (GSAPDIAGQNVAN) is a binding site for NAD(+).

Belongs to the isocitrate and isopropylmalate dehydrogenases family. LeuB type 1 subfamily. As to quaternary structure, homodimer. Mg(2+) serves as cofactor. It depends on Mn(2+) as a cofactor.

Its subcellular location is the cytoplasm. The enzyme catalyses (2R,3S)-3-isopropylmalate + NAD(+) = 4-methyl-2-oxopentanoate + CO2 + NADH. It functions in the pathway amino-acid biosynthesis; L-leucine biosynthesis; L-leucine from 3-methyl-2-oxobutanoate: step 3/4. In terms of biological role, catalyzes the oxidation of 3-carboxy-2-hydroxy-4-methylpentanoate (3-isopropylmalate) to 3-carboxy-4-methyl-2-oxopentanoate. The product decarboxylates to 4-methyl-2 oxopentanoate. In Acinetobacter baylyi (strain ATCC 33305 / BD413 / ADP1), this protein is 3-isopropylmalate dehydrogenase.